Consider the following 447-residue polypeptide: Na(+)-translocating NADH-quinone reductase subunit A (447 aa).

This sequence belongs to the NqrA family. In terms of assembly, composed of six subunits; NqrA, NqrB, NqrC, NqrD, NqrE and NqrF.

The enzyme catalyses a ubiquinone + n Na(+)(in) + NADH + H(+) = a ubiquinol + n Na(+)(out) + NAD(+). NQR complex catalyzes the reduction of ubiquinone-1 to ubiquinol by two successive reactions, coupled with the transport of Na(+) ions from the cytoplasm to the periplasm. NqrA to NqrE are probably involved in the second step, the conversion of ubisemiquinone to ubiquinol. The polypeptide is Na(+)-translocating NADH-quinone reductase subunit A (Neisseria gonorrhoeae (strain NCCP11945)).